We begin with the raw amino-acid sequence, 295 residues long: MFFQDIIKNLNNFWSEEGCLIMQPYDTEKGAGTMNPHTFLRAIGPEPWSVAYTEPCRRPADGRFGDNPNRAQHYFQYQVIIKPSPEGIQEKYLTSLDSLGINPRNHDIRFVEDNWESPTLGAWGVGWEVWLDGMEVTQFTYFQQCGGIDCKPIPIEITYGLERIAMFLQDKESIWDLNWNRDLKYSDIWLQFEKSQCSYNFKESSADNLRKLFEIYQSEAISLIEKKLTYPALDFVLKCSHNFNLLDARGVISVTDRAQYIEKIRKLAREVASSWIDERESLHFPLMKNSKEIFL.

This sequence belongs to the class-II aminoacyl-tRNA synthetase family. Tetramer of two alpha and two beta subunits.

The protein localises to the cytoplasm. It catalyses the reaction tRNA(Gly) + glycine + ATP = glycyl-tRNA(Gly) + AMP + diphosphate. The protein is Glycine--tRNA ligase alpha subunit of Prochlorococcus marinus (strain MIT 9215).